The following is a 323-amino-acid chain: Fructose-1,6-bisphosphatase class 1 (323 aa).

Mg(2+) is bound by residues glutamate 84, aspartate 103, leucine 105, and aspartate 106. Residues 106–109, asparagine 198, and lysine 264 each bind substrate; that span reads DGSS. Glutamate 270 serves as a coordination point for Mg(2+).

Belongs to the FBPase class 1 family. Homotetramer. Requires Mg(2+) as cofactor.

The protein resides in the cytoplasm. It carries out the reaction beta-D-fructose 1,6-bisphosphate + H2O = beta-D-fructose 6-phosphate + phosphate. It participates in carbohydrate biosynthesis; gluconeogenesis. This is Fructose-1,6-bisphosphatase class 1 from Hydrogenovibrio crunogenus (strain DSM 25203 / XCL-2) (Thiomicrospira crunogena).